Consider the following 124-residue polypeptide: Prefoldin subunit beta (124 aa).

This sequence belongs to the prefoldin subunit beta family. As to quaternary structure, heterohexamer of two alpha and four beta subunits.

It localises to the cytoplasm. Its function is as follows. Molecular chaperone capable of stabilizing a range of proteins. Seems to fulfill an ATP-independent, HSP70-like function in archaeal de novo protein folding. This is Prefoldin subunit beta from Pyrobaculum arsenaticum (strain DSM 13514 / JCM 11321 / PZ6).